Reading from the N-terminus, the 85-residue chain is Large ribosomal subunit protein bL27 (85 aa).

The interval 1 to 22 (MAHKKAGGSTKNGRDSESKRLG) is disordered.

The protein belongs to the bacterial ribosomal protein bL27 family.

The polypeptide is Large ribosomal subunit protein bL27 (Alteromonas mediterranea (strain DSM 17117 / CIP 110805 / LMG 28347 / Deep ecotype)).